Consider the following 336-residue polypeptide: Holliday junction branch migration complex subunit RuvB (336 aa).

A large ATPase domain (RuvB-L) region spans residues 1 to 182 (MKERIVNLET…FGMSFRMQFY (182 aa)). ATP-binding positions include leucine 21, arginine 22, glycine 63, lysine 66, threonine 67, serine 68, 129–131 (EDF), arginine 172, tyrosine 182, and arginine 219. Mg(2+) is bound at residue threonine 67. Residues 183–253 (SPSELALIIK…ITLHALNELG (71 aa)) are small ATPAse domain (RuvB-S). The head domain (RuvB-H) stretch occupies residues 256–336 (ELGFDEADLA…IPTLKSQTLF (81 aa)). Positions 310 and 315 each coordinate DNA.

This sequence belongs to the RuvB family. As to quaternary structure, homohexamer. Forms an RuvA(8)-RuvB(12)-Holliday junction (HJ) complex. HJ DNA is sandwiched between 2 RuvA tetramers; dsDNA enters through RuvA and exits via RuvB. An RuvB hexamer assembles on each DNA strand where it exits the tetramer. Each RuvB hexamer is contacted by two RuvA subunits (via domain III) on 2 adjacent RuvB subunits; this complex drives branch migration. In the full resolvosome a probable DNA-RuvA(4)-RuvB(12)-RuvC(2) complex forms which resolves the HJ.

It localises to the cytoplasm. The catalysed reaction is ATP + H2O = ADP + phosphate + H(+). In terms of biological role, the RuvA-RuvB-RuvC complex processes Holliday junction (HJ) DNA during genetic recombination and DNA repair, while the RuvA-RuvB complex plays an important role in the rescue of blocked DNA replication forks via replication fork reversal (RFR). RuvA specifically binds to HJ cruciform DNA, conferring on it an open structure. The RuvB hexamer acts as an ATP-dependent pump, pulling dsDNA into and through the RuvAB complex. RuvB forms 2 homohexamers on either side of HJ DNA bound by 1 or 2 RuvA tetramers; 4 subunits per hexamer contact DNA at a time. Coordinated motions by a converter formed by DNA-disengaged RuvB subunits stimulates ATP hydrolysis and nucleotide exchange. Immobilization of the converter enables RuvB to convert the ATP-contained energy into a lever motion, pulling 2 nucleotides of DNA out of the RuvA tetramer per ATP hydrolyzed, thus driving DNA branch migration. The RuvB motors rotate together with the DNA substrate, which together with the progressing nucleotide cycle form the mechanistic basis for DNA recombination by continuous HJ branch migration. Branch migration allows RuvC to scan DNA until it finds its consensus sequence, where it cleaves and resolves cruciform DNA. This chain is Holliday junction branch migration complex subunit RuvB, found in Helicobacter pylori (strain G27).